Here is a 187-residue protein sequence, read N- to C-terminus: dCTP deaminase, dUMP-forming (187 aa).

DCTP is bound by residues 101–106 and D119; that span reads KSSLGR. The active-site Proton donor/acceptor is the E129. Q148, Y162, and Q174 together coordinate dCTP.

This sequence belongs to the dCTP deaminase family. Homotrimer.

It carries out the reaction dCTP + 2 H2O = dUMP + NH4(+) + diphosphate. It functions in the pathway pyrimidine metabolism; dUMP biosynthesis; dUMP from dCTP: step 1/1. Bifunctional enzyme that catalyzes both the deamination of dCTP to dUTP and the hydrolysis of dUTP to dUMP without releasing the toxic dUTP intermediate. This Corynebacterium kroppenstedtii (strain DSM 44385 / JCM 11950 / CIP 105744 / CCUG 35717) protein is dCTP deaminase, dUMP-forming.